A 366-amino-acid polypeptide reads, in one-letter code: MRVTAPRTLLLLLSGGLALTETWAGSHSLRYFDTAVSRPGRREPRFISVGYVDDTQFVRFDSDAASPRGEPRAPWVEQEGPEYWDRETQKYKRQAQADRVSLRNLRGYYNQSEDGSHTLQWMYGCDLGPDGRLLRGYGQSAYDGKDYIALNEDLRSWTAADTAAQITQRKWEAAREAEQLRAYLEGKRVESCRRYLENGKETLQRTECPKTHMTHHPVSDHEATLRCWALAFYPAEITLTWQRDGEDQIQDTELVETRPAGDGTFQKWAAVVVPSGQEQRYTCHVQHEGLPEPLTLRWKPTSQPTIPIVGIVAGLAVLAVLAVLGAVVTAMMCRRKSSGGKGGSCSQAACSNSAQGSDESLIACKA.

Positions 1-24 are cleaved as a signal peptide; it reads MRVTAPRTLLLLLSGGLALTETWA. The segment at 25–114 is alpha-1; the sequence is GSHSLRYFDT…LRGYYNQSED (90 aa). Topologically, residues 25 to 308 are extracellular; that stretch reads GSHSLRYFDT…KPTSQPTIPI (284 aa). N-linked (GlcNAc...) asparagine glycosylation is present at asparagine 110. The interval 115–206 is alpha-2; that stretch reads GSHTLQWMYG…ENGKETLQRT (92 aa). Cystine bridges form between cysteine 125/cysteine 192 and cysteine 227/cysteine 283. Residues 207–298 are alpha-3; the sequence is ECPKTHMTHH…GLPEPLTLRW (92 aa). One can recognise an Ig-like C1-type domain in the interval 209–297; that stretch reads PKTHMTHHPV…EGLPEPLTLR (89 aa). Residues 299–308 are connecting peptide; that stretch reads KPTSQPTIPI. Residues 309-332 form a helical membrane-spanning segment; the sequence is VGIVAGLAVLAVLAVLGAVVTAMM. At 333–366 the chain is on the cytoplasmic side; it reads CRRKSSGGKGGSCSQAACSNSAQGSDESLIACKA. A phosphoserine mark is found at serine 357 and serine 360.

This sequence belongs to the MHC class I family. As to quaternary structure, heterodimer of an alpha chain and a beta chain (beta-2-microglobulin).

It is found in the membrane. Involved in the presentation of foreign antigens to the immune system. This chain is Patr class I histocompatibility antigen, C alpha chain, found in Pan troglodytes (Chimpanzee).